Consider the following 198-residue polypeptide: MEAFDTHTGIGVPLRRSNVDTDQIIPAVFLKRVTRTGFEDGLFASWRSDPSFVLNLSPFDRGSVLVAGPDFGTGSSREHAVWALMDYGFRVVISSRFGDIFRGNAGKAGLLAAEVDQDGVELLWKLIEQSPGLEITVNLQDRNVIAGTVVLPFRIDDHTAWRLLEGLDDIALTLRKLDEIEAYEAAYPAWKPRTLPTS.

The protein belongs to the LeuD family. LeuD type 1 subfamily. Heterodimer of LeuC and LeuD.

The catalysed reaction is (2R,3S)-3-isopropylmalate = (2S)-2-isopropylmalate. It participates in amino-acid biosynthesis; L-leucine biosynthesis; L-leucine from 3-methyl-2-oxobutanoate: step 2/4. Catalyzes the isomerization between 2-isopropylmalate and 3-isopropylmalate, via the formation of 2-isopropylmaleate. This is 3-isopropylmalate dehydratase small subunit from Mycobacterium marinum (strain ATCC BAA-535 / M).